Reading from the N-terminus, the 92-residue chain is Small ribosomal subunit protein uS19c (92 aa).

This sequence belongs to the universal ribosomal protein uS19 family.

It localises to the plastid. Its subcellular location is the chloroplast. Functionally, protein S19 forms a complex with S13 that binds strongly to the 16S ribosomal RNA. The polypeptide is Small ribosomal subunit protein uS19c (Phaseolus angularis (Azuki bean)).